The chain runs to 274 residues: UPF0173 metal-dependent hydrolase AnaeK_1127 (274 aa).

This sequence belongs to the UPF0173 family.

This is UPF0173 metal-dependent hydrolase AnaeK_1127 from Anaeromyxobacter sp. (strain K).